The following is a 200-amino-acid chain: Probable molybdenum cofactor guanylyltransferase (200 aa).

GTP contacts are provided by residues 9–11 (LAG), Lys21, Asp69, and Asp100. Mg(2+) is bound at residue Asp100.

This sequence belongs to the MobA family. It depends on Mg(2+) as a cofactor.

The protein localises to the cytoplasm. The catalysed reaction is Mo-molybdopterin + GTP + H(+) = Mo-molybdopterin guanine dinucleotide + diphosphate. Transfers a GMP moiety from GTP to Mo-molybdopterin (Mo-MPT) cofactor (Moco or molybdenum cofactor) to form Mo-molybdopterin guanine dinucleotide (Mo-MGD) cofactor. The polypeptide is Probable molybdenum cofactor guanylyltransferase (Bacillus cereus (strain B4264)).